A 302-amino-acid chain; its full sequence is tRNA pseudouridine synthase B (302 aa).

Asp-47 (nucleophile) is an active-site residue.

Belongs to the pseudouridine synthase TruB family. Type 1 subfamily.

It catalyses the reaction uridine(55) in tRNA = pseudouridine(55) in tRNA. Its function is as follows. Responsible for synthesis of pseudouridine from uracil-55 in the psi GC loop of transfer RNAs. The polypeptide is tRNA pseudouridine synthase B (Methylobacillus flagellatus (strain ATCC 51484 / DSM 6875 / VKM B-1610 / KT)).